The chain runs to 1680 residues: Sodium channel protein type 7 subunit alpha (1680 aa).

Over 1–117 the chain is Cytoplasmic; it reads MLTSPEPKGL…RRAVIKVLVH (117 aa). An I repeat occupies 100-401; it reads TLSPLSSLRR…ILTMAYEQEK (302 aa). Residues 118 to 137 form a helical membrane-spanning segment; it reads PLFRLLILISVLTDSILMCM. The Extracellular portion of the chain corresponds to 138–141; the sequence is SNLP. A helical transmembrane segment spans residues 142–167; it reads EWILAVENTLLGIYTFEILVKVIARG. Over 168–178 the chain is Cytoplasmic; sequence IWAGSFSFLGD. Residues 179–196 traverse the membrane as a helical segment; that stretch reads LWNWLDFSVTLFELITRS. Residues 197 to 200 lie on the Extracellular side of the membrane; the sequence is SPLS. A helical membrane pass occupies residues 201 to 219; the sequence is SLPMFKTIRTLRILKIIPL. Residues 220 to 237 are Cytoplasmic-facing; it reads NHGLQSIVVTLVQCLKKL. Residues 238 to 259 form a helical membrane-spanning segment; that stretch reads LGAIALALFFLTVSSLFGMGLF. The Extracellular segment spans residues 260–338; that stretch reads MGNLKHKCVR…PDNGFTSFDN (79 aa). Residues C267 and C307 are joined by a disulfide bond. N-linked (GlcNAc...) asparagine glycosylation is found at N281 and N309. An intramembrane region (pore-forming) is located at residues 339 to 366; sequence FGWALLAMFRLMTQDYPELLYHQILYAS. Position 367 (G367) is a topological domain, extracellular. Residues 368 to 407 traverse the membrane as a helical segment; it reads KIYMIFFVLISFWFAFYMASLFLGILTMAYEQEKQRASEE. Residues 408-505 are Cytoplasmic-facing; that stretch reads SRDMDSKCHQ…EFADRIITHP (98 aa). Residues 487–756 form an II repeat; that stretch reads CSPCWIKLNE…QLAVAWIKMV (270 aa). Residues 506–521 traverse the membrane as a helical segment; that stretch reads LFDLFLVICIILNICF. Residues 522 to 530 lie on the Extracellular side of the membrane; sequence LALEHFPMS. The helical transmembrane segment at 531 to 559 threads the bilayer; the sequence is EELMSLLAIGNLVFIGIYTIEMILKIIAM. Topologically, residues 560-568 are cytoplasmic; that stretch reads HPYGYFQIS. A helical membrane pass occupies residues 569–586; it reads WHIFDSILVVLGLTEMLL. The Extracellular portion of the chain corresponds to 587-592; sequence ADIEEI. Residues 593–608 traverse the membrane as a helical segment; sequence TVFILVPLIFIKLGKY. Topologically, residues 609–625 are cytoplasmic; the sequence is APPFKNLMRILGRALVA. The chain crosses the membrane as a helical span at residues 626-654; the sequence is LKDLVLLVSIFIYFSAVFGMKLFGRSYKD. Residues 655–672 are Extracellular-facing; sequence CVCHVDQDCQRQRWHMSD. 2 disulfides stabilise this stretch: C657–C663 and C695–C704. Positions 673–699 form an intramembrane region, pore-forming; sequence FLHAYVTVFRILCGEWIETLWECMEVA. Position 700 (G700) is a topological domain, extracellular. The helical transmembrane segment at 701–731 threads the bilayer; it reads EAWCIPFYMMVILIGNLLILYLFVALVSSFA. Residues 732-933 lie on the Cytoplasmic side of the membrane; that stretch reads SYDATTEVSK…KTCCKIVENS (202 aa). Residues 807-833 are compositionally biased toward polar residues; that stretch reads DQSSGTEKTPVTESESQSLIASPSVSE. Residues 807-874 are disordered; it reads DQSSGTEKTP…MKQSSSSECS (68 aa). Position 842 is a phosphoserine (S842). One copy of the III repeat lies at 915 to 1223; sequence NGKIWRNIRK…KKQYRALKKL (309 aa). The chain crosses the membrane as a helical span at residues 934 to 952; that stretch reads WFECFIGLVTLLCTGTLAL. Over 953-960 the chain is Extracellular; that stretch reads EDIYIDQR. A helical transmembrane segment spans residues 961–989; the sequence is KTIKIFLEYGDMIFAYIFILEMLLKWVAY. Topologically, residues 990-997 are cytoplasmic; the sequence is GFKAYFSN. Residues 998 to 1019 form a helical membrane-spanning segment; it reads NWYKLDFMVVIVLCLSLIGKTR. Residue E1020 is a topological domain, extracellular. Residues 1021–1039 traverse the membrane as a helical segment; that stretch reads DLNPLASIKFLRALRVLSQ. The Cytoplasmic portion of the chain corresponds to 1040-1054; it reads FERMKVVLRALIKTT. The chain crosses the membrane as a helical span at residues 1055-1079; sequence LPAVSVFLVCLMIWLLFSVMGVFLF. Residues 1080 to 1126 are Extracellular-facing; sequence AGKFYECIDPTRGERFSVFEVMNKSQCENLVFNESMPWENAKLNFDN. C1086 and C1106 form a disulfide bridge. 2 N-linked (GlcNAc...) asparagine glycosylation sites follow: N1102 and N1112. The segment at residues 1127 to 1153 is an intramembrane region (pore-forming); sequence VGNGFLSLFQVATFNGWISIMNSAIDS. The Extracellular segment spans residues 1154–1166; that stretch reads VGVYMQPSFEHSL. Residues 1167 to 1201 form a helical membrane-spanning segment; the sequence is HMYTYFIIFVVFGLFLPLCMLIGVIIRNFNKQKIK. Residues 1202 to 1249 lie on the Cytoplasmic side of the membrane; it reads QGGSNIFITVKQKKQYRALKKLLYADSQKPAARPRNKFQGFICDVVTH. An IV repeat occupies 1232-1530; that stretch reads AARPRNKFQG…WNRFDPDRTQ (299 aa). Residues 1250–1271 traverse the membrane as a helical segment; the sequence is RVFNVIIILLICFQATTIMIQN. Topologically, residues 1272-1275 are extracellular; sequence DEQS. The helical transmembrane segment at 1276–1304 threads the bilayer; that stretch reads PQIETAVFWMNSLFTMLFTLECILKLTAF. Residues 1305-1311 lie on the Cytoplasmic side of the membrane; sequence RCHYFTS. The chain crosses the membrane as a helical span at residues 1312–1337; the sequence is AWNVHDFMVVVFSITGLLLPLSIGQY. Residues 1338–1340 lie on the Extracellular side of the membrane; sequence FVP. The helical transmembrane segment at 1341–1361 threads the bilayer; that stretch reads PSLVQLLLLSRIIHVLRPGKG. Topologically, residues 1362–1376 are cytoplasmic; it reads PKVFHDLMLPLMLSL. Residues 1377–1401 traverse the membrane as a helical segment; sequence PALLNIALLIFLVMFIYAIFGMYNF. The Extracellular segment spans residues 1402–1419; it reads AYVKKEAGINDVSNFETF. An intramembrane region (pore-forming) is located at residues 1420 to 1443; sequence GSSMLCLFQVTTFSGWDGMLDAIF. The Extracellular portion of the chain corresponds to 1444-1467; sequence NSQWSDCDPDKINPGTQVRGDCGS. C1450 and C1465 are disulfide-bonded. A helical membrane pass occupies residues 1468–1503; that stretch reads PSVGIFYFVSYILISWLIIVNMYVVLIMEFLSIPSK. Residues 1504–1680 are Cytoplasmic-facing; that stretch reads RKNRTLSEDD…EEKASIQTQI (177 aa). The interval 1646–1680 is disordered; sequence KIQDIPEIDDGREDPNSKGVHSGQIEEKASIQTQI.

It belongs to the sodium channel (TC 1.A.1.10) family. SCN7A subfamily. In terms of assembly, the sodium channel formed by SCN7A is probably a heterooligomeric complex consisting of the ion conducting pore forming alpha subunit SCN7A and regulatory beta subunits such as SCN3B. Interacts with ATP1A1; activates ATP1A1 and thereby indirectly signals to nearby neurons to regulate sodium homeostasis. As to expression, not tissue specific but widely expressed.

It localises to the cell membrane. It catalyses the reaction Na(+)(in) = Na(+)(out). In terms of biological role, sodium leak channel functioning as an osmosensor regulating sodium ion levels in various tissues and organs. While most sodium channels are voltage-gated, SCN7A is not and lets sodium flow through membrane along its concentration gradient. In glial cells of the central nervous system, senses body-fluid sodium levels and controls salt intake behavior as well as voluntary water intake through activation of nearby neurons to maintain appropriate sodium levels in the body. By mediating sodium influx into keratinocytes, also plays a role in skin barrier homeostasis. This chain is Sodium channel protein type 7 subunit alpha, found in Rattus norvegicus (Rat).